The primary structure comprises 573 residues: L-lactate dehydrogenase (cytochrome) (573 aa).

The transit peptide at 1-73 (MFKSQLRTAT…LYQKDKFISA (73 aa)) directs the protein to the mitochondrion. Positions 80–157 (DIELTPEIVS…PPEKHLGPLV (78 aa)) constitute a Cytochrome b5 heme-binding domain. The heme b site is built by H115, H138, and Y208. Residues 182-542 (PPLSQMINLH…TPELLDTRSI (361 aa)) enclose the FMN hydroxy acid dehydrogenase domain. Pyruvate is bound at residue Y208. Residues 260–263 (SATA), S290, and Q313 contribute to the FMN site. Y315 serves as a coordination point for pyruvate. T341 contacts FMN. Residue K357 coordinates heme b. K408 is a binding site for FMN. Positions 432 and 435 each coordinate pyruvate. Residues 468-472 (DGGVR) and 491-492 (GR) each bind FMN.

It in the N-terminal section; belongs to the cytochrome b5 family. The protein in the C-terminal section; belongs to the FMN-dependent alpha-hydroxy acid dehydrogenase family. In terms of assembly, homotetramer. FMN is required as a cofactor. Heme b serves as cofactor.

It localises to the mitochondrion intermembrane space. The enzyme catalyses (S)-lactate + 2 Fe(III)-[cytochrome c] = 2 Fe(II)-[cytochrome c] + pyruvate + 2 H(+). Catalyzes the oxidation of (S)-lactate (L-lactate) to pyruvate with subsequent transfer of electrons to cytochrome c. Is involved in the utilization of (S)-lactate as a sole source of carbon for growth. This chain is L-lactate dehydrogenase (cytochrome) (CYB2), found in Wickerhamomyces anomalus (Yeast).